The sequence spans 55 residues: MAVPKKRTSTSKKRIRKNIWKRKGYSIALKAFSLAKSLSTGNSKSFFVRQTKINK.

It belongs to the bacterial ribosomal protein bL32 family.

The protein localises to the plastid. It is found in the chloroplast. The protein is Large ribosomal subunit protein bL32c of Nicotiana sylvestris (Wood tobacco).